The primary structure comprises 233 residues: Small ribosomal subunit protein uS3 (233 aa).

A KH type-2 domain is found at 39-107; that stretch reads VRQFLTKELS…PAQINIAEVR (69 aa).

This sequence belongs to the universal ribosomal protein uS3 family. Part of the 30S ribosomal subunit. Forms a tight complex with proteins S10 and S14.

Binds the lower part of the 30S subunit head. Binds mRNA in the 70S ribosome, positioning it for translation. The polypeptide is Small ribosomal subunit protein uS3 (Vibrio vulnificus (strain CMCP6)).